The primary structure comprises 119 residues: Large ribosomal subunit protein bL20 (119 aa).

It belongs to the bacterial ribosomal protein bL20 family.

In terms of biological role, binds directly to 23S ribosomal RNA and is necessary for the in vitro assembly process of the 50S ribosomal subunit. It is not involved in the protein synthesizing functions of that subunit. This Nitrosomonas europaea (strain ATCC 19718 / CIP 103999 / KCTC 2705 / NBRC 14298) protein is Large ribosomal subunit protein bL20.